Reading from the N-terminus, the 591-residue chain is MATKASSILHPPNETEHTMSRITQEGKKLTYNLKVIQQPERARACGAGAKSSADRRPVDPPPVVELRVFESDLNDQHKTDITFSYNANFFLFATLEWARPIAHGRVQTQTPSCPVLTGVPVAGIAYLDRPTQAGYFIFPDLSVRHEGLYRLNFNLYEEMKEPKHADKGGLVPHSQNHMAPLTPSKPRSPHQFLHFRLVVKSVPFTVYSAKKFPGLAESTSLSRIVAEQGCRVRIRRDVRMRRREPKPNKDYGAYDDRRITPDPYPGTPVERPRSASNASMDDPYRYPTGPPQVQPSPDYGYHHPSHQQPSPNLAATPQSHLSFGAAPPQYHAPPPPPTAHPAPPPAYTSPHLGYTHTRQLSAGPEYDPHRQKYTQYPPPSPHSDIYDQSKSSLPMNPSVDHPSYPPMPYEQRMSDPKLYAPPSQLHPTQQYQQPTPPPPPPAAIAPHPPHQRTPTKPSPSTFFPPTPSRLSVEVDSSNEADDAILNAIRTRRGYILDEKSGATKRSRDSSDHDLKPLRNGQRPVVSGDEAAKGEIGETSGGSDDEIMTYRRADGRLVAKQRVSVHSKGKEVNIPRDVDLLPRRPEVCAVAE.

Positions 1-22 (MATKASSILHPPNETEHTMSRI) are disordered. The segment covering 13 to 22 (NETEHTMSRI) has biased composition (basic and acidic residues). Residues 26–235 (GKKLTYNLKV…AEQGCRVRIR (210 aa)) form the Velvet domain. A Nuclear localization signal motif is present at residues 40–45 (ERARAC). A disordered region spans residues 238–547 (VRMRRREPKP…TSGGSDDEIM (310 aa)). A compositionally biased stretch (basic and acidic residues) spans 245-260 (PKPNKDYGAYDDRRIT). The span at 306-321 (HQQPSPNLAATPQSHL) shows a compositional bias: polar residues. Over residues 330-347 (YHAPPPPPTAHPAPPPAY) the composition is skewed to pro residues. The segment covering 386–395 (YDQSKSSLPM) has biased composition (polar residues). The segment covering 422–433 (PSQLHPTQQYQQ) has biased composition (low complexity). The span at 434–448 (PTPPPPPPAAIAPHP) shows a compositional bias: pro residues. Residues 452–493 (RTPTKPSPSTFFPPTPSRLSVEVDSSNEADDAILNAIRTRRG) form a PEST region. The segment covering 494-516 (YILDEKSGATKRSRDSSDHDLKP) has biased composition (basic and acidic residues).

It belongs to the velvet family. VeA subfamily. Component of the heterotrimeric velvet complex composed of LAE1, VEA1 and VEL2; VEA1 acting as a bridging protein between LAE1 and VEL2.

It is found in the nucleus. The protein resides in the cytoplasm. Its function is as follows. Component of the velvet transcription factor complex that controls sexual/asexual developmental ratio in response to light, promoting sexual development in the darkness while stimulating asexual sporulation under illumination. The velvet complex hat acts as a global regulator for secondary metabolite gene expression. Regulates cleistothecial formation and hyphal growth. Acts as a positive regulator of virulence. The chain is Developmental and secondary metabolism regulator VEA1 from Ajellomyces capsulatus (Darling's disease fungus).